We begin with the raw amino-acid sequence, 62 residues long: Large ribosomal subunit protein bL33 (62 aa).

This sequence belongs to the bacterial ribosomal protein bL33 family.

In Acaryochloris marina (strain MBIC 11017), this protein is Large ribosomal subunit protein bL33.